A 432-amino-acid polypeptide reads, in one-letter code: MPVLNLRSDFAEADALPEQMGAIGRRARAAARRMALASARTKDAALKLIAERIRASRDEILSENARDVAAARCAGQTAALIDRLTLDPGRLAAIADAVEKVGSLADPVGRQLAAIERPNGLLIERIAVPLGVVGVIFEARPNVTADAGALCLKAGNAAILRAGSDSHRSAMAIARAMSRGLADAGLPEDAIQLVPTRDRAAVGLMLAGLDGCVDVIVPRGGRGLVERVQAEARVPVFAHLDGINHVYVAAAADLDMARTVLLNSKMRRTSVCGAAETLLVDRACAATHLAPLVQALLDAGCAVRGDAATRAVDPRVTAASEEDWHTEYLDAIIAVRVVDGIEAAIEHIETYGSHHTDAIITENDAEATRFLAEVDSAIVTHNASTQFADGGEFGFGAEIGIATGRMHARGPVGVEQLTTFKYRVHGTGQIRP.

It belongs to the gamma-glutamyl phosphate reductase family.

It is found in the cytoplasm. The enzyme catalyses L-glutamate 5-semialdehyde + phosphate + NADP(+) = L-glutamyl 5-phosphate + NADPH + H(+). The protein operates within amino-acid biosynthesis; L-proline biosynthesis; L-glutamate 5-semialdehyde from L-glutamate: step 2/2. Its function is as follows. Catalyzes the NADPH-dependent reduction of L-glutamate 5-phosphate into L-glutamate 5-semialdehyde and phosphate. The product spontaneously undergoes cyclization to form 1-pyrroline-5-carboxylate. The sequence is that of Gamma-glutamyl phosphate reductase from Methylobacterium radiotolerans (strain ATCC 27329 / DSM 1819 / JCM 2831 / NBRC 15690 / NCIMB 10815 / 0-1).